The primary structure comprises 108 residues: Large ribosomal subunit protein uL23 (108 aa).

The protein belongs to the universal ribosomal protein uL23 family. As to quaternary structure, part of the 50S ribosomal subunit. Contacts protein L29, and trigger factor when it is bound to the ribosome.

Functionally, one of the early assembly proteins it binds 23S rRNA. One of the proteins that surrounds the polypeptide exit tunnel on the outside of the ribosome. Forms the main docking site for trigger factor binding to the ribosome. The protein is Large ribosomal subunit protein uL23 of Mycoplasmoides gallisepticum (strain R(low / passage 15 / clone 2)) (Mycoplasma gallisepticum).